We begin with the raw amino-acid sequence, 440 residues long: Thymidine phosphorylase (440 aa).

Belongs to the thymidine/pyrimidine-nucleoside phosphorylase family. Homodimer.

The enzyme catalyses thymidine + phosphate = 2-deoxy-alpha-D-ribose 1-phosphate + thymine. The protein operates within pyrimidine metabolism; dTMP biosynthesis via salvage pathway; dTMP from thymine: step 1/2. The enzymes which catalyze the reversible phosphorolysis of pyrimidine nucleosides are involved in the degradation of these compounds and in their utilization as carbon and energy sources, or in the rescue of pyrimidine bases for nucleotide synthesis. In Yersinia enterocolitica serotype O:8 / biotype 1B (strain NCTC 13174 / 8081), this protein is Thymidine phosphorylase.